A 416-amino-acid chain; its full sequence is Lactose permease (416 aa).

The Cytoplasmic portion of the chain corresponds to Met1–Gly13. Residues Phe14 to Leu34 form a helical membrane-spanning segment. At His35 to Thr45 the chain is on the periplasmic side. Residues Gly46–Leu66 form a helical membrane-spanning segment. Residues Ser67–His75 lie on the Cytoplasmic side of the membrane. A helical membrane pass occupies residues Leu76 to Gly96. Residue Pro97 is a topological domain, periplasmic. The helical transmembrane segment at Leu98–Tyr118 threads the bilayer. The Cytoplasmic portion of the chain corresponds to Asn119 to Arg144. Residues Met145 to Asn165 form a helical membrane-spanning segment. A topological domain (periplasmic) is located at residue Asn166. Residues Gln167–Ser187 form a helical membrane-spanning segment. Topologically, residues Lys188–Lys211 are cytoplasmic. The chain crosses the membrane as a helical span at residues Leu212–Val232. Over Ser233–Gly262 the chain is Periplasmic. The chain crosses the membrane as a helical span at residues Tyr263–Val283. At Asn284–Asn290 the chain is on the cytoplasmic side. Residues Ala291–His309 traverse the membrane as a helical segment. Residues Thr310–Val314 are Periplasmic-facing. Residues Val315–Ile336 traverse the membrane as a helical segment. At Thr337–Thr347 the chain is on the cytoplasmic side. Residues Ile348–Ala368 traverse the membrane as a helical segment. Residues Gly369–Gln378 lie on the Periplasmic side of the membrane. The helical transmembrane segment at Gly379 to Leu399 threads the bilayer. Topologically, residues Ser400 to Leu416 are cytoplasmic.

The protein belongs to the major facilitator superfamily. Oligosaccharide:H(+) symporter (OHS) (TC 2.A.1.5) family.

Its subcellular location is the cell inner membrane. It catalyses the reaction lactose(in) + H(+)(in) = lactose(out) + H(+)(out). Responsible for transport of beta-galactosides into the cell, with the concomitant import of a proton (symport system). The chain is Lactose permease (lacY) from Citrobacter freundii.